A 349-amino-acid chain; its full sequence is MVTYKDAGVDIYEEDRIIRALISKINFEREDAIKPADLKGHYAGAIEFGDYYLVLCTDGVGSKMVVAEMANNFETVPIDMIAMNVNDAICIGAEPVALVDYMAVEEITENIAEQIGKGLNEGIKESNINLIGGETASLPNMIKGIDLAGTVLAVVKKSEIISGQTVKKGDVIVGLRSSGIHSNGLSLARKVFFEISNLNVNSKLSYGKTVADELLTPTRIYVKPVLDMIKKADVKGLAHITGGGFRKLKRLNKEVCYKIDNLPEIPPIFKEIQTLGNVADEEMFKTFNMGIGFCVIVSKENAEKIIEISNQYKIPAFVIGEIEDNIEIDGEFKKETVLVEYNGKKMIME.

The protein belongs to the AIR synthase family.

It localises to the cytoplasm. The enzyme catalyses 2-formamido-N(1)-(5-O-phospho-beta-D-ribosyl)acetamidine + ATP = 5-amino-1-(5-phospho-beta-D-ribosyl)imidazole + ADP + phosphate + H(+). The protein operates within purine metabolism; IMP biosynthesis via de novo pathway; 5-amino-1-(5-phospho-D-ribosyl)imidazole from N(2)-formyl-N(1)-(5-phospho-D-ribosyl)glycinamide: step 2/2. This chain is Phosphoribosylformylglycinamidine cyclo-ligase, found in Methanococcus vannielii (strain ATCC 35089 / DSM 1224 / JCM 13029 / OCM 148 / SB).